The chain runs to 118 residues: Large ribosomal subunit protein bL19 (118 aa).

The protein belongs to the bacterial ribosomal protein bL19 family.

In terms of biological role, this protein is located at the 30S-50S ribosomal subunit interface and may play a role in the structure and function of the aminoacyl-tRNA binding site. This is Large ribosomal subunit protein bL19 from Helicobacter acinonychis (strain Sheeba).